The chain runs to 590 residues: Beta-(1--&gt;2)glucan export ATP-binding/permease protein NdvA (590 aa).

The 281-residue stretch at valine 21 to glutamate 301 folds into the ABC transmembrane type-1 domain. 6 helical membrane passes run alanine 22–phenylalanine 42, valine 55–leucine 75, glutamine 136–valine 156, methionine 158–lysine 178, leucine 248–glycine 268, and valine 275–phenylalanine 295. In terms of domain architecture, ABC transporter spans valine 335–alanine 569. Position 368–375 (glycine 368–threonine 375) interacts with ATP.

It belongs to the ABC transporter superfamily. Beta-(1--&gt;2)glucan exporter (TC 3.A.1.108.1) family. As to quaternary structure, homodimer.

It localises to the cell inner membrane. It carries out the reaction [(1-&gt;2)-beta-D-glucosyl](n)(in) + ATP + H2O = [(1-&gt;2)-beta-D-glucosyl](n)(out) + ADP + phosphate + H(+). Functionally, involved in beta-(1--&gt;2)glucan export. Transmembrane domains (TMD) form a pore in the inner membrane and the ATP-binding domain (NBD) is responsible for energy generation. The chain is Beta-(1--&gt;2)glucan export ATP-binding/permease protein NdvA from Mesorhizobium japonicum (strain LMG 29417 / CECT 9101 / MAFF 303099) (Mesorhizobium loti (strain MAFF 303099)).